Reading from the N-terminus, the 673-residue chain is UvrABC system protein B (673 aa).

The Helicase ATP-binding domain maps to 24–182 (EGVERNDPAQ…YSFVEILYNR (159 aa)). 37–44 (GVTGSGKT) is a binding site for ATP. Residues 90–113 (YYDYYQPEAFMPTSGLYIEKDLAI) carry the Beta-hairpin motif. The Helicase C-terminal domain maps to 429 to 591 (QIDDLLDEIQ…ITPITVNKSK (163 aa)). Residues 634-669 (TKMIDRAKKDMDKAAKDLDFVEAARYRDEMFALQKI) enclose the UVR domain.

The protein belongs to the UvrB family. Forms a heterotetramer with UvrA during the search for lesions. Interacts with UvrC in an incision complex.

It is found in the cytoplasm. The UvrABC repair system catalyzes the recognition and processing of DNA lesions. A damage recognition complex composed of 2 UvrA and 2 UvrB subunits scans DNA for abnormalities. Upon binding of the UvrA(2)B(2) complex to a putative damaged site, the DNA wraps around one UvrB monomer. DNA wrap is dependent on ATP binding by UvrB and probably causes local melting of the DNA helix, facilitating insertion of UvrB beta-hairpin between the DNA strands. Then UvrB probes one DNA strand for the presence of a lesion. If a lesion is found the UvrA subunits dissociate and the UvrB-DNA preincision complex is formed. This complex is subsequently bound by UvrC and the second UvrB is released. If no lesion is found, the DNA wraps around the other UvrB subunit that will check the other stand for damage. The protein is UvrABC system protein B of Cytophaga hutchinsonii (strain ATCC 33406 / DSM 1761 / CIP 103989 / NBRC 15051 / NCIMB 9469 / D465).